The chain runs to 346 residues: F(420)H(2) dehydrogenase subunit H (346 aa).

8 helical membrane passes run 18–38, 91–111, 125–145, 170–190, 196–216, 257–277, 284–304, and 326–346; these read GIVG…AVWL, IFML…AVFI, ISVL…FMVA, PLGI…IVDI, LHWN…SLMA, ILGS…PGFI, GIIV…MVII, and LLPL…YLGA.

This sequence belongs to the complex I subunit 1 family. In terms of assembly, the FPO complex is composed of at least 13 different subunits. FpoA, FpoH, FpoJ, FpoK, FpoL, FpoM and FpoN proteins constitute the membrane sector of the complex.

It is found in the cell membrane. It catalyses the reaction methanophenazine + reduced coenzyme F420-(gamma-L-Glu)(n) = dihydromethanophenazine + oxidized coenzyme F420-(gamma-L-Glu)(n) + H(+). Functionally, component of the F(420)H(2) dehydrogenase (FPO complex) which is part of the energy-conserving F(420)H(2):heterodisulfide oxidoreductase system. The membrane-bound electron transfer system of the complex plays an important role in the metabolism of methylotrophic methanogens when the organisms grow on methanol or methylamines. Catalyzes the oxidation of methanophenazine to dihydromethanophenazine. It shuttles electrons from F(420)H(2), via FAD and iron-sulfur (Fe-S) centers, to methanophenazine (an electron carrier in the membrane). It couples the redox reaction to proton translocation (for every two electrons transferred, two hydrogen ions are translocated across the cytoplasmic membrane), and thus conserves the redox energy in a proton gradient. This Methanosarcina barkeri (strain Fusaro / DSM 804) protein is F(420)H(2) dehydrogenase subunit H.